The primary structure comprises 351 residues: Selenide, water dikinase (351 aa).

U15 is an active-site residue. U15 is a non-standard amino acid (selenocysteine). ATP contacts are provided by residues K18 and 47–49; that span reads DNE. D50 serves as a coordination point for Mg(2+). ATP is bound by residues D67, D90, and 138 to 140; that span reads GHS. D90 provides a ligand contact to Mg(2+). Mg(2+) is bound at residue D227.

Belongs to the selenophosphate synthase 1 family. Class I subfamily. In terms of assembly, homodimer. The cofactor is Mg(2+).

It catalyses the reaction hydrogenselenide + ATP + H2O = selenophosphate + AMP + phosphate + 2 H(+). Synthesizes selenophosphate from selenide and ATP. This chain is Selenide, water dikinase, found in Nitratidesulfovibrio vulgaris (strain DP4) (Desulfovibrio vulgaris).